A 670-amino-acid polypeptide reads, in one-letter code: Microtubule-associated protein ssm4 (670 aa).

One can recognise a CAP-Gly domain in the interval 23–65 (GSTDFESGIWLGVELLNGKGKNDGSVKGKRYFSCEKGKGIFVR). 2 coiled-coil regions span residues 209-254 (KSEL…KNSI) and 404-582 (VKTR…KLAD). Ser460 is modified (phosphoserine). Position 606 is a phosphothreonine (Thr606).

The protein resides in the cytoplasm. Its subcellular location is the cytoskeleton. It localises to the spindle. Functionally, binds to nuclear microtubules with the effect of either modifying their structure or function. This then promotes meiotic nuclear division. The polypeptide is Microtubule-associated protein ssm4 (ssm4) (Schizosaccharomyces pombe (strain 972 / ATCC 24843) (Fission yeast)).